A 229-amino-acid polypeptide reads, in one-letter code: 2-C-methyl-D-erythritol 4-phosphate cytidylyltransferase (229 aa).

Belongs to the IspD/TarI cytidylyltransferase family. IspD subfamily.

It catalyses the reaction 2-C-methyl-D-erythritol 4-phosphate + CTP + H(+) = 4-CDP-2-C-methyl-D-erythritol + diphosphate. The protein operates within isoprenoid biosynthesis; isopentenyl diphosphate biosynthesis via DXP pathway; isopentenyl diphosphate from 1-deoxy-D-xylulose 5-phosphate: step 2/6. Catalyzes the formation of 4-diphosphocytidyl-2-C-methyl-D-erythritol from CTP and 2-C-methyl-D-erythritol 4-phosphate (MEP). In Clostridium botulinum (strain Langeland / NCTC 10281 / Type F), this protein is 2-C-methyl-D-erythritol 4-phosphate cytidylyltransferase.